A 215-amino-acid polypeptide reads, in one-letter code: Ependymin (215 aa).

Residues 1–20 (MHTVKLLCVVFSCLCAVAWA) form the signal peptide. N-linked (GlcNAc...) asparagine glycans are attached at residues asparagine 71 and asparagine 94.

Belongs to the ependymin family. Forms disulfide-linked dimers. In terms of processing, binds calcium through the terminal sialic acids. EPDs are synthesized in the meninx and secreted in the cerebrospinal fluid.

The protein resides in the secreted. Functionally, may play a role in neural plasticity. May be involved during axon regeneration. The protein is Ependymin (epd) of Cyprinus carpio (Common carp).